A 5255-amino-acid polypeptide reads, in one-letter code: SCO-spondin (5255 aa).

Positions 1 to 18 are cleaved as a signal peptide; that stretch reads MGIVATVLLWVVTEAARG. Positions 19–111 constitute an EMI domain; it reads RWCERTEQVT…ACCAGWSGPH (93 aa). Residues Asn97, Asn136, Asn156, and Asn255 are each glycosylated (N-linked (GlcNAc...) asparagine). One can recognise a VWFD 1 domain in the interval 192–358; that stretch reads ASCTVWAGSR…PDANPELSCS (167 aa). Intrachain disulfides connect Cys194-Cys317 and Cys216-Cys357. One can recognise a TIL 1 domain in the interval 453 to 508; that stretch reads CGHGQRYSDCVSSCPASCMAAGTAEEGHCRDDCASGCECTPGLLLDRGACIPQSAC. The 94-residue stretch at 508–601 folds into the VWFC 1 domain; it reads CPCLHRGHIY…CGGHQPLSCL (94 aa). The VWFD 2 domain occupies 546 to 717; it reads AECAVLGDLH…NKYRVSTDCP (172 aa). Disulfide bonds link Cys548/Cys681, Cys570/Cys716, and Cys592/Cys600. A glycan (N-linked (GlcNAc...) asparagine) is linked at Asn801. The 60-residue stretch at 809–868 folds into the TIL 2 domain; that stretch reads CRGGQVYQECSSPCGRTCADLRLDGASSCPSLDNICVSGCNCPEGPVLDDGGQCVPPGVC. The VWFC 2 domain occupies 868 to 926; the sequence is CPCQHSSQLYPAGSKIRQGCNACMCTAGTWSCTDAPCPDAAFCPGDLVYVFGSCLRTCD. 2 N-linked (GlcNAc...) asparagine glycosylation sites follow: Asn931 and Asn972. Positions 998-1168 constitute a VWFD 3 domain; the sequence is GTCVATGDPH…NSWRVSLLCP (171 aa). Cystine bridges form between Cys1000-Cys1132, Cys1022-Cys1167, and Cys1043-Cys1050. One can recognise a TIL 3 domain in the interval 1263-1319; the sequence is CDGGQEYSACGPPCPQTCRNLGLELPEHCDTMSCLEGCFCPEGKVLHEGSCIDPAEC. Asn1340 carries an N-linked (GlcNAc...) asparagine glycan. 6 consecutive LDL-receptor class A domains span residues 1362 to 1398, 1400 to 1436, 1439 to 1477, 1479 to 1515, 1515 to 1551, and 1555 to 1593; these read HCPD…EVCA, HCAP…RGCP, PCAP…AGCS, SCSV…RGCV, VCPA…AFCP, and TCAP…VRCM. 18 cysteine pairs are disulfide-bonded: Cys1363-Cys1376, Cys1370-Cys1389, Cys1383-Cys1397, Cys1401-Cys1413, Cys1408-Cys1426, Cys1420-Cys1435, Cys1440-Cys1452, Cys1447-Cys1465, Cys1459-Cys1476, Cys1480-Cys1492, Cys1487-Cys1505, Cys1499-Cys1514, Cys1516-Cys1528, Cys1523-Cys1541, Cys1535-Cys1550, Cys1556-Cys1568, Cys1563-Cys1581, and Cys1575-Cys1592. Residue Asn1610 is glycosylated (N-linked (GlcNAc...) asparagine). 3 consecutive LDL-receptor class A domains span residues 1616–1652, 1654–1693, and 1699–1734; these read VCGP…LGCN, SCVL…DNCG, and PCPG…LACE. 3 disulfide bridges follow: Cys1617–Cys1629, Cys1624–Cys1642, and Cys1636–Cys1651. Asn1652 carries an N-linked (GlcNAc...) asparagine glycan. 6 cysteine pairs are disulfide-bonded: Cys1655–Cys1668, Cys1662–Cys1681, Cys1675–Cys1692, Cys1700–Cys1711, Cys1706–Cys1724, and Cys1718–Cys1733. A glycan (N-linked (GlcNAc...) asparagine) is linked at Asn1713. An N-linked (GlcNAc...) asparagine glycan is attached at Asn1743. The region spanning 1748–1790 is the LDL-receptor class A 10 domain; it reads PCAEYSCRDGDCITFKQVCNGLPDCRDGDMASGWLPSDEWDCG. Cystine bridges form between Cys1749–Cys1759, Cys1754–Cys1772, Cys1766–Cys1789, Cys1801–Cys1837, Cys1805–Cys1842, and Cys1816–Cys1827. 2 consecutive TSP type-1 domains span residues 1789–1843 and 1845–1903; these read CGQW…TACP and DGAW…DGCP. Asn1856 carries N-linked (GlcNAc...) asparagine glycosylation. 3 cysteine pairs are disulfide-bonded: Cys1857/Cys1897, Cys1861/Cys1902, and Cys1871/Cys1881. Residues 1907–1961 enclose the TIL 4 domain; it reads CPGGLQPRPCAPCPASCADLASRAPCRREQCTPGCWCAEGLVLDGERGCVRPREC. EGF-like domains are found at residues 1919–1956 and 1957–1983; these read CPAS…RGCV and RPRE…CRLC. The 59-residue stretch at 1961–2019 folds into the VWFC 3 domain; sequence CRCEVDGLRYWPGQRMKLNCRLCTCLDGQPRRCRHNPACSVSCSWSAWSPWGECLGPCG. Residues 2002–2058 enclose the TSP type-1 3 domain; sequence SCSWSAWSPWGECLGPCGVQSIQWSFRSPSHPGKHGTNRQCRGIYRKARRCQTEPCQ. 3 cysteine pairs are disulfide-bonded: Cys2003/Cys2042, Cys2014/Cys2018, and Cys2052/Cys2057. In terms of domain architecture, VWFC 4 spans 2058 to 2120; that stretch reads QECEHQGRSR…GKGDSCCFCA (63 aa). 2 N-linked (GlcNAc...) asparagine glycosylation sites follow: Asn2125 and Asn2230. Intrachain disulfides connect Cys2162/Cys2310, Cys2328/Cys2339, Cys2335/Cys2352, and Cys2346/Cys2361. Positions 2162 to 2310 constitute an F5/8 type C domain; sequence CYSPLGIASL…IFLRAELLGC (149 aa). The 36-residue stretch at 2327-2362 folds into the LDL-receptor class A 11 domain; sequence PCGTGEFWCGVSCVTASRRCDGATDCPGGADEAGCE. A disordered region spans residues 2352-2373; sequence CPGGADEAGCEPPSSTTLPTHP. The segment covering 2364–2373 has biased composition (polar residues); it reads PSSTTLPTHP. LDL-receptor class A domains are found at residues 2481-2517 and 2538-2574; these read LCPP…AHCG and TCSP…SSCA. Cystine bridges form between Cys2482-Cys2494, Cys2489-Cys2507, Cys2501-Cys2516, Cys2539-Cys2551, Cys2546-Cys2564, Cys2558-Cys2573, Cys2576-Cys2612, Cys2587-Cys2591, Cys2622-Cys2627, Cys2642-Cys2679, Cys2646-Cys2684, and Cys2657-Cys2669. 2 TSP type-1 domains span residues 2575-2628 and 2630-2685; these read DCIL…RACP and PGAW…QPCG. Positions 2708–2750 constitute a TIL 5 domain; it reads PPCPQVCGDLSATSSCQSPCQEGCRCPPGLFLQEGTCVNASQC. N-linked (GlcNAc...) asparagine glycosylation occurs at Asn2746. TSP type-1 domains are found at residues 2790–2844, 2849–2903, and 2905–2958; these read ACAW…TPCA, SSGW…APCP, and AGVW…RPCG. 9 disulfide bridges follow: Cys2791–Cys2829, Cys2802–Cys2806, Cys2839–Cys2843, Cys2861–Cys2897, Cys2865–Cys2902, Cys2881–Cys2887, Cys2917–Cys2952, Cys2921–Cys2957, and Cys2932–Cys2942. The 50-residue stretch at 2971 to 3020 folds into the TIL 6 domain; the sequence is EECRHSEGRCPWICQDLGAGVACTAQCQPGCHCPAGLLLQNGTCVPPSHC. Residues Asn3011, Asn3042, and Asn3065 are each glycosylated (N-linked (GlcNAc...) asparagine). Residues 3020–3077 form the VWFC 5 domain; sequence CLCHHRGHLYQPGDINALDTCNNCTCVTGQMVCSTETCPVPCTWSNWTAWSTCSHSCD. 2 TSP type-1 domains span residues 3060 to 3115 and 3117 to 3158; these read PCTW…QPCR and VAPW…APCP. 3 disulfides stabilise this stretch: Cys3061–Cys3099, Cys3072–Cys3076, and Cys3109–Cys3114. An N-linked (GlcNAc...) asparagine glycan is attached at Asn3136. One can recognise a TIL 7 domain in the interval 3165 to 3217; that stretch reads CPPGKQWQACAQGAASCAELSAAPPADGSCHPGCYCPPGALLLNNECVAEAAC. Residues 3217–3275 enclose the VWFC 6 domain; sequence CPCAVDGVLYQPGDVVPQGCHNCSCIAGRVTNCSQEDCGDVDGPWTPWTPWSECSASCG. 2 N-linked (GlcNAc...) asparagine glycosylation sites follow: Asn3238 and Asn3248. A TSP type-1 11 domain is found at 3258 to 3309; it reads DGPWTPWTPWSECSASCGPGRQRRYRFCSAHPGVPCAEPQPQERPCARQPCH. 3 disulfide bridges follow: Cys3270–Cys3303, Cys3274–Cys3308, and Cys3285–Cys3293. Residues Asn3350, Asn3366, and Asn3392 are each glycosylated (N-linked (GlcNAc...) asparagine). 2 consecutive TSP type-1 domains span residues 3410 to 3475 and 3477 to 3532; these read PGAW…PPCP and DGAW…SSCP. Cystine bridges form between Cys3422/Cys3468, Cys3426/Cys3474, Cys3437/Cys3449, Cys3489/Cys3524, Cys3492/Cys3531, and Cys3502/Cys3514. The TIL 8 domain maps to 3534–3589; the sequence is CAGGLVAFTCGKPCPHSCEDLREDTACMATPRCLPACACPHGQLLQDGDCVPPELC. 2 N-linked (GlcNAc...) asparagine glycosylation sites follow: Asn3598 and Asn3625. TSP type-1 domains are found at residues 3644–3700 and 3702–3751; these read DGGW…EGCP and EEPW…HVCR. Intrachain disulfides connect Cys3656–Cys3693, Cys3660–Cys3699, Cys3671–Cys3683, Cys3714–Cys3745, Cys3718–Cys3750, and Cys3729–Cys3735. N-linked (GlcNAc...) asparagine glycosylation is found at Asn3823 and Asn3869. TSP type-1 domains lie at 3878 to 3934, 3951 to 4004, 4018 to 4074, and 4076 to 4131; these read DGGF…PECP, EEGF…PLCS, NCSW…QACK, and DGAW…QPCD. Disulfide bonds link Cys3890–Cys3928, Cys3894–Cys3933, Cys3906–Cys3918, Cys3963–Cys3998, Cys3967–Cys4003, and Cys3982–Cys3988. The interval 3932-3951 is disordered; sequence ECPAVPTTEPGPGVAGAEEE. N-linked (GlcNAc...) asparagine glycosylation occurs at Asn4018. 6 disulfide bridges follow: Cys4019–Cys4055, Cys4030–Cys4034, Cys4068–Cys4073, Cys4088–Cys4125, Cys4092–Cys4130, and Cys4103–Cys4115. Residues 4134–4189 enclose the TIL 9 domain; it reads CPPGMALVTCANHCPRHCGDLQEGIVCREEEHCEPGCRCPNGTLEQDGGCVPLAHC. Residues Asn4174 and Asn4211 are each glycosylated (N-linked (GlcNAc...) asparagine). TSP type-1 domains lie at 4230–4282, 4322–4384, and 4386–4433; these read RCPW…GPCP, GAEH…RPCP, and ECSW…SGCS. Disulfide bonds link Cys4231–Cys4266, Cys4242–Cys4246, and Cys4276–Cys4281. Asn4362 is a glycosylation site (N-linked (GlcNAc...) asparagine). 3 disulfides stabilise this stretch: Cys4387–Cys4417, Cys4398–Cys4400, and Cys4427–Cys4432. Asn4428 carries an N-linked (GlcNAc...) asparagine glycan. Residues 4437–4492 form the TIL 10 domain; sequence CEPPFEFQPCSPPCARLCSTLQHPELCPAQSHCLPGCFCPQGLLEQRSACVPPEQC. Asn4498 is a glycosylation site (N-linked (GlcNAc...) asparagine). TSP type-1 domains are found at residues 4537–4608 and 4610–4662; these read LPLS…DICQ and LCLW…AVCP. Disulfide bonds link Cys4548–Cys4601, Cys4551–Cys4607, Cys4575–Cys4591, Cys4611–Cys4646, Cys4622–Cys4626, and Cys4656–Cys4661. Positions 4675 to 4722 constitute a TIL 11 domain; that stretch reads TTCANSCPRACADLWQHVECVQGGCKPGCRCPQGQLLQDGLCVPTAQC. Residues Asn4730, Asn4747, and Asn4752 are each glycosylated (N-linked (GlcNAc...) asparagine). TSP type-1 domains follow at residues 4762–4815 and 4817–4869; these read CPSY…QPCP and GCQL…HNCT. Disulfide bonds link Cys4774/Cys4809, Cys4778/Cys4814, Cys4789/Cys4798, Cys4818/Cys4852, Cys4829/Cys4833, and Cys4863/Cys4868. Asn4867 carries N-linked (GlcNAc...) asparagine glycosylation. Residues 4872 to 4926 form the TIL 12 domain; that stretch reads CPRSQVHRECANACPHACADLRPQTQCLPQPCQPGCACPPGQVLQDGACVPPEEC. Asn4939 and Asn4970 each carry an N-linked (GlcNAc...) asparagine glycan. One can recognise a TSP type-1 27 domain in the interval 4979–5033; it reads DCLWSPWSPWSPCSVTCGMGERLSHRHPLRQRLYEGAECLGPPVRRAACHLPDCA. 3 disulfides stabilise this stretch: Cys4980–Cys5017, Cys4991–Cys4995, and Cys5027–Cys5032. Asn5081, Asn5122, and Asn5169 each carry an N-linked (GlcNAc...) asparagine glycan. Residues 5092–5150 enclose the VWFC 7 domain; the sequence is CECLHQGQLHQPGSEWQEQCARCRCVDGKANCTDGCTPLSCPEGEVKVREPGRCCPVCR. 4 cysteine pairs are disulfide-bonded: Cys5161-Cys5209, Cys5175-Cys5226, Cys5185-Cys5242, and Cys5189-Cys5244. The 88-residue stretch at 5161–5248 folds into the CTCK domain; it reads CRRFTELRNI…IHSCECSSCQ (88 aa).

It belongs to the thrombospondin family.

Its subcellular location is the secreted. It localises to the extracellular space. Functionally, involved in the modulation of neuronal aggregation. May be involved in developmental events during the formation of the central nervous system. The polypeptide is SCO-spondin (SSPO) (Gallus gallus (Chicken)).